The sequence spans 614 residues: Afadin- and alpha-actinin-binding protein (614 aa).

2 coiled-coil regions span residues Met-131–Asp-227 and Arg-266–Ser-293. Phosphoserine occurs at positions 290, 293, and 312. Residues Leu-292–Asp-317 are disordered. The stretch at Ile-374–Leu-460 forms a coiled coil. A phosphoserine mark is found at Ser-536, Ser-540, and Ser-542.

Belongs to the ADIP family. In terms of assembly, interacts with afadin and alpha-actinin. Interacts with VAV2. Interacts with SSX2 and SSX3. Does not interact with SSX1 and SSX4. Interacts with PCM1. Interacts with WRAP73. Widely expressed, with the highest expression in brain, intermediate expression in kidney, testis, spinal cord, liver, heart, lung, skeletal muscle, ovary, fetal liver and fetal brain, and little to no expression in pancreas and spleen. All specific brain regions showed intermediate to high expression, with highest expression in amygdala. Also expressed in fetal tissues, mainly in liver and brain.

The protein localises to the cell junction. Its subcellular location is the adherens junction. It localises to the nucleus. It is found in the cytoplasm. The protein resides in the cytoskeleton. The protein localises to the microtubule organizing center. Its subcellular location is the centrosome. It localises to the centriolar satellite. It is found in the cilium basal body. Functionally, belongs to an adhesion system, which plays a role in the organization of homotypic, interneuronal and heterotypic cell-cell adherens junctions (AJs). May connect the nectin-afadin and E-cadherin-catenin system through alpha-actinin and may be involved in organization of the actin cytoskeleton at AJs through afadin and alpha-actinin. Involved in cell movement: localizes at the leading edge of moving cells in response to PDGF and is required for the formation of the leading edge and the promotion of cell movement, possibly via activation of Rac signaling. Acts as a centrosome maturation factor, probably by maintaining the integrity of the pericentriolar material and proper microtubule nucleation at mitotic spindle poles. The function seems to implicate at least in part WRAP73; the SSX2IP:WRAP73 complex is proposed to act as regulator of spindle anchoring at the mitotic centrosome. Involved in ciliogenesis. It is required for targeted recruitment of the BBSome, CEP290, RAB8, and SSTR3 to the cilia. This Homo sapiens (Human) protein is Afadin- and alpha-actinin-binding protein (SSX2IP).